A 317-amino-acid chain; its full sequence is L-lactate dehydrogenase (317 aa).

NAD(+)-binding positions include Val-17, Asp-38, Lys-43, Tyr-69, and 83–84; that span reads GA. Positions 86 and 92 each coordinate substrate. Residues Ser-105, 122-124, and Ser-147 contribute to the NAD(+) site; that span reads ATN. 124-127 contacts substrate; the sequence is NPVD. Residue 152 to 155 coordinates substrate; the sequence is DSAR. 2 residues coordinate beta-D-fructose 1,6-bisphosphate: Arg-157 and His-172. Residue His-179 is the Proton acceptor of the active site. Tyr-224 carries the phosphotyrosine modification. Thr-233 serves as a coordination point for substrate.

It belongs to the LDH/MDH superfamily. LDH family. Homotetramer.

The protein localises to the cytoplasm. The catalysed reaction is (S)-lactate + NAD(+) = pyruvate + NADH + H(+). The protein operates within fermentation; pyruvate fermentation to lactate; (S)-lactate from pyruvate: step 1/1. Its activity is regulated as follows. Allosterically activated by fructose 1,6-bisphosphate (FBP). Catalyzes the conversion of lactate to pyruvate. In Bacillus velezensis (strain DSM 23117 / BGSC 10A6 / LMG 26770 / FZB42) (Bacillus amyloliquefaciens subsp. plantarum), this protein is L-lactate dehydrogenase.